The chain runs to 1407 residues: DNA-directed RNA polymerase subunit beta' (1407 aa).

Residues cysteine 70, cysteine 72, cysteine 85, and cysteine 88 each coordinate Zn(2+). 3 residues coordinate Mg(2+): aspartate 460, aspartate 462, and aspartate 464. Residues cysteine 814, cysteine 889, cysteine 896, and cysteine 899 each contribute to the Zn(2+) site. The disordered stretch occupies residues leucine 1384–glycine 1407. Positions glycine 1386 to serine 1399 are enriched in polar residues.

Belongs to the RNA polymerase beta' chain family. The RNAP catalytic core consists of 2 alpha, 1 beta, 1 beta' and 1 omega subunit. When a sigma factor is associated with the core the holoenzyme is formed, which can initiate transcription. Requires Mg(2+) as cofactor. The cofactor is Zn(2+).

The enzyme catalyses RNA(n) + a ribonucleoside 5'-triphosphate = RNA(n+1) + diphosphate. Its function is as follows. DNA-dependent RNA polymerase catalyzes the transcription of DNA into RNA using the four ribonucleoside triphosphates as substrates. This chain is DNA-directed RNA polymerase subunit beta', found in Xylella fastidiosa (strain Temecula1 / ATCC 700964).